We begin with the raw amino-acid sequence, 217 residues long: Fucoxanthin-chlorophyll a-c binding protein B, chloroplastic (217 aa).

A chloroplast-targeting transit peptide spans 1 to 39 (MKSAVMAVACAAAPGFRGPSAFNGAALTTSAKACSAMKM). A run of 3 helical transmembrane segments spans residues 81–101 (IAML…PGML), 122–142 (IPPA…LAVM), and 183–203 (GRAA…NNKP).

It belongs to the fucoxanthin chlorophyll protein family. The LHC complex of chromophytic algae is composed of fucoxanthin, chlorophyll A and C bound non-covalently by fucoxanthin chlorophyll proteins (FCPs). The ratio of pigments in this LHC is; fucoxanthin: chlorophyll C: chlorophyll A; (0.6-1): (0.1-0.3): (1).

It is found in the plastid. The protein resides in the chloroplast thylakoid membrane. Its function is as follows. The light-harvesting complex (LHC) functions as a light receptor, it captures and delivers excitation energy to photosystems with which it is closely associated. Energy is transferred from the carotenoid and chlorophyll C (or B) to chlorophyll A and the photosynthetic reaction centers where it is used to synthesize ATP and reducing power. This Macrocystis pyrifera (Giant kelp) protein is Fucoxanthin-chlorophyll a-c binding protein B, chloroplastic (FCPB).